The following is a 165-amino-acid chain: Nucleotide-binding protein P9211_04811 (165 aa).

It belongs to the YajQ family.

Functionally, nucleotide-binding protein. The protein is Nucleotide-binding protein P9211_04811 of Prochlorococcus marinus (strain MIT 9211).